The sequence spans 214 residues: Osteoclast-stimulating factor 1 (214 aa).

N-acetylserine is present on S2. In terms of domain architecture, SH3 spans 12 to 71; that stretch reads GQVKVFRALYTFEPRTPDELYFEEGDIIYITDMSDTSWWKGTCKGRTGLIPSNYVAEQAE. ANK repeat units lie at residues 72–101, 105–135, and 139–168; these read SIDN…GVNG, AGST…ELNQ, and LGDT…RTDL. T200 carries the post-translational modification Phosphothreonine. Phosphoserine is present on residues S202 and S213.

As to quaternary structure, interacts with SRC and SMN1. Interacts with FASLG.

The protein resides in the cytoplasm. Its function is as follows. Induces bone resorption, acting probably through a signaling cascade which results in the secretion of factor(s) enhancing osteoclast formation and activity. The polypeptide is Osteoclast-stimulating factor 1 (Ostf1) (Rattus norvegicus (Rat)).